The chain runs to 325 residues: MAAMRKALPRRLVGLASLRAVSTSSMGTLPKRVKIVEVGPRDGLQNEKNIVSTPVKIKLIDMLSEAGLSVIETTSFVSPKWVPQMGDHTEVLKGIQKFPGINYPVLTPNLKGFEAAVAAGAKEVVIFGAASELFTKKNINCSIEESFQRFDAILKAAQSANISVRGYVSCALGCPYEGKISPAKVAEVTKKFYSMGCYEISLGDTIGVGTPGIMKDMLSAVMQEVPLAALAVHCHDTYGQALANTLMALQMGVSVVDSSVAGLGGCPYAQGASGNLATEDLVYMLEGLGIHTGVNLQKLLEAGNFICQALNRKTSSKVAQATCKL.

The N-terminal 27 residues, 1–27 (MAAMRKALPRRLVGLASLRAVSTSSMG), are a transit peptide targeting the mitochondrion. The Pyruvate carboxyltransferase domain maps to 33 to 300 (VKIVEVGPRD…HTGVNLQKLL (268 aa)). Arginine 41 is a substrate binding site. Aspartate 42 is an a divalent metal cation binding site. An N6-acetyllysine; alternate modification is found at lysine 48. An N6-succinyllysine; alternate modification is found at lysine 48. Lysine 111 is modified (N6-acetyllysine). N6-acetyllysine; alternate is present on residues lysine 137 and lysine 179. An N6-succinyllysine; alternate mark is found at lysine 137 and lysine 179. Positions 233 and 235 each coordinate a divalent metal cation. Cysteine 266 is an active-site residue. Asparagine 275 lines the a divalent metal cation pocket. A Microbody targeting signal motif is present at residues 323 to 325 (CKL). Lysine 324 carries the N6-acetyllysine modification.

Belongs to the HMG-CoA lyase family. In terms of assembly, homodimer; disulfide-linked. Can also form homotetramers. Requires a divalent metal cation as cofactor. As to expression, highest expression in liver. Expressed in pancreas, kidney, intestine, testis, fibroblasts and lymphoblasts. Very low expression in brain and skeletal muscle. The relative expression of isoform 2 (at mRNA level) is highest in heart (30%), skeletal muscle (22%), and brain (14%).

The protein resides in the mitochondrion matrix. The protein localises to the peroxisome. The enzyme catalyses (3S)-3-hydroxy-3-methylglutaryl-CoA = acetoacetate + acetyl-CoA. The protein operates within metabolic intermediate metabolism; (S)-3-hydroxy-3-methylglutaryl-CoA degradation; acetoacetate from (S)-3-hydroxy-3-methylglutaryl-CoA: step 1/1. With respect to regulation, stimulated by reducing agents such as dithiothreitol (DTT). In terms of biological role, mitochondrial 3-hydroxy-3-methylglutaryl-CoA lyase that catalyzes a cation-dependent cleavage of (S)-3-hydroxy-3-methylglutaryl-CoA into acetyl-CoA and acetoacetate, a key step in ketogenesis. Terminal step in leucine catabolism. Ketone bodies (beta-hydroxybutyrate, acetoacetate and acetone) are essential as an alternative source of energy to glucose, as lipid precursors and as regulators of metabolism. The sequence is that of Hydroxymethylglutaryl-CoA lyase, mitochondrial (HMGCL) from Homo sapiens (Human).